Here is a 200-residue protein sequence, read N- to C-terminus: Large ribosomal subunit protein uL4 (200 aa).

Residues 38–68 form a disordered region; that stretch reads GRQGSKQQKTRSDVRGGGKRPWRQKGTGRAR. Residues 54–65 show a composition bias toward basic residues; that stretch reads GGKRPWRQKGTG.

This sequence belongs to the universal ribosomal protein uL4 family. Part of the 50S ribosomal subunit.

One of the primary rRNA binding proteins, this protein initially binds near the 5'-end of the 23S rRNA. It is important during the early stages of 50S assembly. It makes multiple contacts with different domains of the 23S rRNA in the assembled 50S subunit and ribosome. In terms of biological role, forms part of the polypeptide exit tunnel. The protein is Large ribosomal subunit protein uL4 of Pseudomonas savastanoi pv. phaseolicola (strain 1448A / Race 6) (Pseudomonas syringae pv. phaseolicola (strain 1448A / Race 6)).